A 97-amino-acid polypeptide reads, in one-letter code: Exodeoxyribonuclease 7 small subunit (97 aa).

Positions 1-22 are disordered; sequence MAKTASPGATPPGNGTEPLPDN.

It belongs to the XseB family. Heterooligomer composed of large and small subunits.

Its subcellular location is the cytoplasm. It catalyses the reaction Exonucleolytic cleavage in either 5'- to 3'- or 3'- to 5'-direction to yield nucleoside 5'-phosphates.. In terms of biological role, bidirectionally degrades single-stranded DNA into large acid-insoluble oligonucleotides, which are then degraded further into small acid-soluble oligonucleotides. This chain is Exodeoxyribonuclease 7 small subunit, found in Burkholderia lata (strain ATCC 17760 / DSM 23089 / LMG 22485 / NCIMB 9086 / R18194 / 383).